The following is a 270-amino-acid chain: Formamidopyrimidine-DNA glycosylase (270 aa).

Residue P2 is the Schiff-base intermediate with DNA of the active site. E3 acts as the Proton donor in catalysis. The Proton donor; for beta-elimination activity role is filled by K58. H91, R109, and R151 together coordinate DNA. An FPG-type zinc finger spans residues 236-270 (MVYNRQEEPCRLCGTPIRQIRQGQRSTYYCPLCQP). R260 functions as the Proton donor; for delta-elimination activity in the catalytic mechanism.

This sequence belongs to the FPG family. Monomer. It depends on Zn(2+) as a cofactor.

The enzyme catalyses Hydrolysis of DNA containing ring-opened 7-methylguanine residues, releasing 2,6-diamino-4-hydroxy-5-(N-methyl)formamidopyrimidine.. It carries out the reaction 2'-deoxyribonucleotide-(2'-deoxyribose 5'-phosphate)-2'-deoxyribonucleotide-DNA = a 3'-end 2'-deoxyribonucleotide-(2,3-dehydro-2,3-deoxyribose 5'-phosphate)-DNA + a 5'-end 5'-phospho-2'-deoxyribonucleoside-DNA + H(+). Functionally, involved in base excision repair of DNA damaged by oxidation or by mutagenic agents. Acts as a DNA glycosylase that recognizes and removes damaged bases. Has a preference for oxidized purines, such as 7,8-dihydro-8-oxoguanine (8-oxoG). Has AP (apurinic/apyrimidinic) lyase activity and introduces nicks in the DNA strand. Cleaves the DNA backbone by beta-delta elimination to generate a single-strand break at the site of the removed base with both 3'- and 5'-phosphates. The sequence is that of Formamidopyrimidine-DNA glycosylase from Chromobacterium violaceum (strain ATCC 12472 / DSM 30191 / JCM 1249 / CCUG 213 / NBRC 12614 / NCIMB 9131 / NCTC 9757 / MK).